The sequence spans 834 residues: Copper-exporting P-type ATPase (834 aa).

The Cytoplasmic segment spans residues 2–186; it reads SQTIDLTLDG…TAVATMKRFR (185 aa). HMA domains follow at residues 3–64 and 99–162; these read QTID…YDAS and DSQQ…YGAE. Cu(+) contacts are provided by Cys-14, Cys-17, Cys-110, and Cys-113. 2 consecutive short sequence motifs (CXXC motif) follow at residues 14–17 and 110–113; these read CGHC and CASC. The helical transmembrane segment at 187–207 threads the bilayer; sequence WQAIVALAVGIPVMVWGMIGD. Topologically, residues 208 to 217 are periplasmic; loop 1; sequence NMMVTADNRS. Residues 218 to 238 traverse the membrane as a helical segment; the sequence is LWLVIGLITLAVMVFAGGHFY. Residues 239-253 lie on the Cytoplasmic side of the membrane; sequence RSAWKSLLNGAATMD. The chain crosses the membrane as a helical span at residues 254–274; it reads TLVALGTGVAWLYSMSVNLWP. At 275–283 the chain is on the periplasmic; loop 2 side; it reads QWFPMEARH. Residues 284–304 form a helical membrane-spanning segment; it reads LYYEASAMIIGLINLGHMLEA. The Cytoplasmic portion of the chain corresponds to 305-437; that stretch reads RARQRSSKAL…EIGQLADKIS (133 aa). The helical transmembrane segment at 438–458 threads the bilayer; it reads AVFVPVVVVIALVSAAIWYFF. Topologically, residues 459–463 are periplasmic; loop 3; it reads GPAPQ. The chain crosses the membrane as a helical span at residues 464 to 484; the sequence is IVYTLVIATTVLIIACPCALG. The Cytoplasmic segment spans residues 485 to 778; it reads LATPMSIISG…ATLHNMKQNL (294 aa). Asp-523 serves as the catalytic 4-aspartylphosphate intermediate. Mg(2+) is bound by residues Asp-720 and Asp-724. The chain crosses the membrane as a helical span at residues 779–799; sequence LGAFIYNSIGIPVAAGILWPF. Position 800 (Thr-800) is a topological domain, periplasmic; loop 4. Residues 801–821 traverse the membrane as a helical segment; the sequence is GTLLNPVVAGAAMALSSITVV. The Cytoplasmic segment spans residues 822 to 834; it reads SNANRLLRFKPKE.

The protein belongs to the cation transport ATPase (P-type) (TC 3.A.3) family. Type IB subfamily. As to quaternary structure, copper-exporting P-type ATPase interacts with apo-periplasmic copper chaperone CusF; when CusF is precharged with copper it binds very little CopA. The periplasmic loops of CopA, especially the first half of loop 1, play a large role in binding to CusF.

The protein resides in the cell inner membrane. It is found in the cytoplasm. It carries out the reaction Cu(+)(in) + ATP + H2O = Cu(+)(out) + ADP + phosphate + H(+). Its activity is regulated as follows. Export is inhibited by vanadate. Phosphorylation is inhibited by vanadate and sensitive to KOH and hydroxylamine; it is not inhibited by azide. Phosphorylation is Cu(+) not Cu(2+)-dependent. ATPase activity is inhibited by bathocuproindisulfonate (BCDS), which chelates Cu(+) but not Cu(2+), and stimulated 3-4-fold by Cu(+). ATPase activity is inhibited by Cu(2+) plus DTT or Ag(+). In terms of biological role, exports Cu(+) from the cytoplasm to the periplasm. Binds 2 Cu(+) ions per monomer, which are transferred to periplasmic copper chaperone CusF upon ATP hydrolysis. In vitro an excess of CusF over CopA is required for efficient transfer. May also be involved in silver export. MRNA is subject to programmed ribosomal frameshifting which produces a cytoplasmic copper chaperone CopA(Z) that corresponds to the first HMA domain. The soluble form is essential for cell survivial in the presence of CuSO(4); in growth competition experiments between wild-type and a version that prevents expression of CopA(Z) after 50 generations the non-CopA(Z) version is nearly extinct. The first HMA domain (residues 1-70) can be replaced by B.subtilis Cu chaperone CopZ. This Escherichia coli (strain K12) protein is Copper-exporting P-type ATPase.